A 452-amino-acid polypeptide reads, in one-letter code: Probable mannose-6-phosphate isomerase (452 aa).

Zn(2+) contacts are provided by Gln-141, His-143, Glu-168, and His-295. Arg-314 is an active-site residue.

The protein belongs to the mannose-6-phosphate isomerase type 1 family. Requires Zn(2+) as cofactor.

Its subcellular location is the cytoplasm. The enzyme catalyses D-mannose 6-phosphate = D-fructose 6-phosphate. It functions in the pathway nucleotide-sugar biosynthesis; GDP-alpha-D-mannose biosynthesis; alpha-D-mannose 1-phosphate from D-fructose 6-phosphate: step 1/2. In terms of biological role, involved in the synthesis of the GDP-mannose and dolichol-phosphate-mannose required for a number of critical mannosyl transfer reactions. The protein is Probable mannose-6-phosphate isomerase (mpi) of Dictyostelium discoideum (Social amoeba).